The sequence spans 772 residues: RNA exonuclease 5 (772 aa).

A compositionally biased stretch (basic and acidic residues) spans 1-10 (MEPEREGTER). Positions 1-26 (MEPEREGTERHPRKVRKRRQAPNKLV) are disordered. Residues 11–21 (HPRKVRKRRQA) show a composition bias toward basic residues. The Exonuclease domain occupies 228 to 376 (LFGLDCEMCL…EDARIILELA (149 aa)). RRM domains lie at 505-579 (STVY…RPVT) and 600-679 (GSIY…RHLH).

The polypeptide is RNA exonuclease 5 (REXO5) (Macaca fascicularis (Crab-eating macaque)).